Here is a 250-residue protein sequence, read N- to C-terminus: Acetylglutamate kinase (250 aa).

Residues 41–42 (GG), R63, and N156 each bind substrate.

The protein belongs to the acetylglutamate kinase family. ArgB subfamily.

Its subcellular location is the cytoplasm. The catalysed reaction is N-acetyl-L-glutamate + ATP = N-acetyl-L-glutamyl 5-phosphate + ADP. It functions in the pathway amino-acid biosynthesis; L-arginine biosynthesis; N(2)-acetyl-L-ornithine from L-glutamate: step 2/4. Its function is as follows. Catalyzes the ATP-dependent phosphorylation of N-acetyl-L-glutamate. In Listeria monocytogenes serotype 4b (strain CLIP80459), this protein is Acetylglutamate kinase.